The sequence spans 340 residues: TATA-box-binding protein (340 aa).

The tract at residues 1-78 is disordered; sequence MNLNSPAVSM…HSLQGSSMQM (78 aa). Positions 57–68 are enriched in low complexity; sequence PQSIQPMQSQQM. Residues 69–78 are compositionally biased toward polar residues; the sequence is HSLQGSSMQM. 2 repeat units span residues 168-244 and 258-335.

The protein belongs to the TBP family. As to quaternary structure, component of the TFIID basal transcription factor complex, composed of TATA-box-binding protein tbp-1, and a number of TBP-associated factors (TAFs). Binds DNA as monomer.

The protein resides in the nucleus. Its function is as follows. The TFIID basal transcription factor complex plays a major role in the initiation of RNA polymerase II (Pol II)-dependent transcription. TFIID recognizes and binds promoters via its subunit tbp-1, a TATA-box-binding protein, and promotes assembly of the pre-initiation complex (PIC). The TFIID complex consists of tbp-1 and TBP-associated factors (TAFs). General transcription factor that functions at the core of the TFIID complex. In Caenorhabditis elegans, this protein is TATA-box-binding protein (tbp-1).